Reading from the N-terminus, the 118-residue chain is Large ribosomal subunit protein bL19 (118 aa).

Belongs to the bacterial ribosomal protein bL19 family.

In terms of biological role, this protein is located at the 30S-50S ribosomal subunit interface and may play a role in the structure and function of the aminoacyl-tRNA binding site. This is Large ribosomal subunit protein bL19 (rplS) from Helicobacter pylori (strain J99 / ATCC 700824) (Campylobacter pylori J99).